The following is a 193-amino-acid chain: Phosphatidylglycerophosphatase and protein-tyrosine phosphatase 1 (193 aa).

The transit peptide at 1–31 (MAASAWLEAGLARVLFYPTLLYTVFRGRVRG) directs the protein to the mitochondrion. Residues 37–188 (WYHRIDHTVL…LKEFHKEITA (152 aa)) enclose the Tyrosine-protein phosphatase domain. N6-succinyllysine is present on lysine 85. The Phosphocysteine intermediate role is filled by cysteine 132.

Belongs to the protein-tyrosine phosphatase family. Non-receptor class dual specificity subfamily. As to quaternary structure, interacts with STYXL1; the interaction inhibits PTPMT1 catalytic activity. As to expression, predominantly expressed in testis. Expressed at lower level in heart, brain, spleen, lung, liver, skeletal muscle, kidney, bone marrow, eye, lymph node, smooth muscle, prostate, thymus, stomach and uterus.

It is found in the mitochondrion inner membrane. It catalyses the reaction a 1,2-diacyl-sn-glycero-3-phospho-(1'-sn-glycero-3'-phosphate) + H2O = a 1,2-diacyl-sn-glycero-3-phospho-(1'-sn-glycerol) + phosphate. The enzyme catalyses O-phospho-L-tyrosyl-[protein] + H2O = L-tyrosyl-[protein] + phosphate. The catalysed reaction is O-phospho-L-seryl-[protein] + H2O = L-seryl-[protein] + phosphate. It carries out the reaction O-phospho-L-threonyl-[protein] + H2O = L-threonyl-[protein] + phosphate. It catalyses the reaction 1,2-di-(9Z-octadecenoyl)-sn-glycero-3-phospho-(1'-sn-glycerol-3'-phosphate) + H2O = 1,2-di-(9Z-octadecenoyl)-sn-glycero-3-phospho-(1'-sn-glycerol) + phosphate. The enzyme catalyses 1,2-dioctanoyl-sn-glycero-3-phospho-(1D-myo-inositol-5-phosphate) + H2O = 1,2-dioctanoyl-sn-glycero-3-phospho-(1D-myo-inositol) + phosphate. The catalysed reaction is a 1-acyl-2-hexanoyl-sn-glycero-3-phospho-(1D-myo-inositol-5-phosphate) + H2O = a 1-acyl-2-hexanoyl-sn-glycero-3-phospho-(1D-myo-inositol) + phosphate. It carries out the reaction 1,2-dibutyryl-sn-glycero-3-phospho-(1D-myo-inositol-5-phosphate) + H2O = 1,2-dibutyryl-sn-glycero-3-phospho-(1D-myo-inositol) + phosphate. Its pathway is phospholipid metabolism; phosphatidylglycerol biosynthesis; phosphatidylglycerol from CDP-diacylglycerol: step 2/2. Functionally, lipid phosphatase which dephosphorylates phosphatidylglycerophosphate (PGP) to phosphatidylglycerol (PG). PGP is an essential intermediate in the biosynthetic pathway of cardiolipin, a mitochondrial-specific phospholipid regulating the membrane integrity and activities of the organelle. Has also been shown to display phosphatase activity toward phosphoprotein substrates, specifically mediates dephosphorylation of mitochondrial proteins, thereby playing an essential role in ATP production. Has probably a preference for proteins phosphorylated on Ser and/or Thr residues compared to proteins phosphorylated on Tyr residues. Probably involved in regulation of insulin secretion in pancreatic beta cells. May prevent intrinsic apoptosis, probably by regulating mitochondrial membrane integrity. This is Phosphatidylglycerophosphatase and protein-tyrosine phosphatase 1 from Mus musculus (Mouse).